Consider the following 49-residue polypeptide: uncharacterized protein (49 aa).

This is an uncharacterized protein from Bacillus subtilis (strain 168).